A 370-amino-acid polypeptide reads, in one-letter code: MAQSSPPQSLQGLVPLGLLPGLGLGSAIGLHVSGLVLRFVRFLPFYATRRPSQPAGPARSTRTTQATAPRRTRPAPAGGQRQSASEREKLRMRTLARALQELRRFLPPSVAPAGQSLTKIETLRLAIRYIGHLSALLGLSEDSLRRRRRRSADAAFSHRCPQCPDGGSPSQAQMLGPSLGSAMSSGVSWGCPPACPGPLISPENLGNRISNVDPRVTPPYCPQIQSPLHQSLERAADSSPWAPPQACPGMQMSPEPRNKTGHWTQSTEPAELTKVYQSLSVSPEPRLSLGSPLLLPRPSCQRLQPQPQPQPQWGCWGHDAEVLSTSEDQGSSPALQLPVASPTPSSGLQLSGCPELWQEDLEGPPLNIFY.

Disordered stretches follow at residues 51 to 89 (PSQP…EREK), 231 to 265 (SLER…HWTQ), and 325 to 350 (TSED…GLQL). Residues 57–77 (PARSTRTTQATAPRRTRPAPA) show a composition bias toward low complexity. The 55-residue stretch at 79-133 (GQRQSASEREKLRMRTLARALQELRRFLPPSVAPAGQSLTKIETLRLAIRYIGHL) folds into the bHLH domain. Positions 325–334 (TSEDQGSSPA) are enriched in polar residues. Positions 326–330 (SEDQG) are may contain a degradation domain.

Post-translationally, degraded by the proteasome. Phosphorylated.

It localises to the nucleus. Its function is as follows. Transcription factor with important role in somitogenesis. Defines the rostrocaudal patterning of the somite by participating in distinct Notch pathways. Also regulates the FGF signaling pathway. Specifies the rostral half of the somites. Generates rostro-caudal polarity of somites by down-regulating in the presumptive rostral domain DLL1, a Notch ligand. Participates in the segment border formation by activating in the anterior presomitic mesoderm LFNG, a negative regulator of DLL1-Notch signaling. Acts as a strong suppressor of Notch activity. Together with MESP1 is involved in the epithelialization of somitic mesoderm and in the development of cardiac mesoderm. May play a role with Tcf15 in the differentiation of myotomal and sclerotomal cells by regulating Pax family genes. Also controls the expression of the protocadherin PCDH8/PAPC, EPHA4, RIPPLY2, NOTCH2, FGFR1, and CER1. Binds to the E-boxes within the EPH4A and RIPPLY2 enhancers. The sequence is that of Mesoderm posterior protein 2 (Mesp2) from Mus musculus (Mouse).